The primary structure comprises 245 residues: MPTFLHHALLACGFLTRLVPARVATADDMAAAVRWFPLAGLVVGGACWLPFALGLAASHPAIQAWLYVLINLWVTRGLHWDGVADLADAWGSSATGERFWDILKDSRIGAFGVMGLLLGFGGQYIGAHEIFISGRLGVLIAAPIVGRGACVILAALVPPGSRSTLGRLTCAGADRIAIGVAATCGILVLLLTTPVMTTVTTIAICGAIVTALAHLARREGGINGDFMGACIAGCEGAVLLAASMG.

A run of 6 helical transmembrane segments spans residues tryptophan 35–leucine 55, isoleucine 108–histidine 128, glycine 137–valine 157, isoleucine 176–methionine 196, threonine 197–arginine 217, and isoleucine 222–alanine 242.

Belongs to the CobS family. It depends on Mg(2+) as a cofactor.

Its subcellular location is the cell inner membrane. The catalysed reaction is alpha-ribazole + adenosylcob(III)inamide-GDP = adenosylcob(III)alamin + GMP + H(+). The enzyme catalyses alpha-ribazole 5'-phosphate + adenosylcob(III)inamide-GDP = adenosylcob(III)alamin 5'-phosphate + GMP + H(+). The protein operates within cofactor biosynthesis; adenosylcobalamin biosynthesis; adenosylcobalamin from cob(II)yrinate a,c-diamide: step 7/7. Joins adenosylcobinamide-GDP and alpha-ribazole to generate adenosylcobalamin (Ado-cobalamin). Also synthesizes adenosylcobalamin 5'-phosphate from adenosylcobinamide-GDP and alpha-ribazole 5'-phosphate. The chain is Adenosylcobinamide-GDP ribazoletransferase from Nitratidesulfovibrio vulgaris (strain DP4) (Desulfovibrio vulgaris).